Here is a 281-residue protein sequence, read N- to C-terminus: NADPH-dependent 7-cyano-7-deazaguanine reductase (281 aa).

87-89 contacts substrate; it reads IES. 89–90 lines the NADPH pocket; it reads SK. The active-site Thioimide intermediate is the C188. D195 functions as the Proton donor in the catalytic mechanism. 227-228 is a substrate binding site; the sequence is HE. Residue 256-257 coordinates NADPH; the sequence is RG.

Belongs to the GTP cyclohydrolase I family. QueF type 2 subfamily. Homodimer.

Its subcellular location is the cytoplasm. It catalyses the reaction 7-aminomethyl-7-carbaguanine + 2 NADP(+) = 7-cyano-7-deazaguanine + 2 NADPH + 3 H(+). It functions in the pathway tRNA modification; tRNA-queuosine biosynthesis. Functionally, catalyzes the NADPH-dependent reduction of 7-cyano-7-deazaguanine (preQ0) to 7-aminomethyl-7-deazaguanine (preQ1). This Photobacterium profundum (strain SS9) protein is NADPH-dependent 7-cyano-7-deazaguanine reductase.